The chain runs to 106 residues: uncharacterized protein (106 aa).

Residues 1–22 form the signal peptide; that stretch reads MKKHPNLLLGFSVYLSAGTKLT. Residues 23-46 form a disordered region; sequence IPPEAEQHTAPSDNNKRKRAKCDD.

This is an uncharacterized protein from Arabidopsis thaliana (Mouse-ear cress).